The chain runs to 102 residues: Protein transport protein sec61 subunit beta (102 aa).

Positions 1–15 (MSSTKASGSVKNSAA) are enriched in polar residues. Positions 1-53 (MSSTKASGSVKNSAASAPGGPKSQIRRRAAVEKNTKESNSGPAGARAAGAPGS) are disordered. Residues 1–72 (MSSTKASGSV…DEASGFKVDP (72 aa)) are Cytoplasmic-facing. A compositionally biased stretch (low complexity) spans 41-52 (GPAGARAAGAPG). A helical transmembrane segment spans residues 73-93 (VVVMVLSVGFIASVFLLHIVA).

The protein belongs to the SEC61-beta family. Heterotrimeric complex composed of SEC61, SBH1 and SSS1.

The protein resides in the endoplasmic reticulum membrane. Necessary for protein translocation in the endoplasmic reticulum. This is Protein transport protein sec61 subunit beta (sbh1) from Schizosaccharomyces pombe (strain 972 / ATCC 24843) (Fission yeast).